A 501-amino-acid chain; its full sequence is Aldehyde dehydrogenase 1A1 (501 aa).

At Ser2 the chain carries N-acetylserine. An N6-acetyllysine mark is found at Lys91 and Lys128. Residues 167-170, 193-196, 226-227, and 246-247 contribute to the NAD(+) site; these read IPWN, KPAE, GP, and GS. Residue Lys252 is modified to N6-acetyllysine. The active-site Proton acceptor is Glu269. NAD(+) is bound at residue 269–271; sequence ELG. The active-site Nucleophile is the Cys303. Residues 336 to 501 form a mediates interaction with PRMT3 region; it reads LTQGINQGPQ…VAMKISQKNS (166 aa). Position 337 is a phosphothreonine (Thr337). 349–353 is an NAD(+) binding site; sequence EQHDK. Lys353 and Lys367 each carry N6-acetyllysine. Residue 400-402 participates in NAD(+) binding; sequence EIF. Lys410 carries the N6-acetyllysine modification. The residue at position 413 (Ser413) is a Phosphoserine. 3 positions are modified to N6-acetyllysine: Lys419, Lys435, and Lys495.

The protein belongs to the aldehyde dehydrogenase family. Homotetramer. Interacts with PRMT3; the interaction is direct, inhibits ALDH1A1 aldehyde dehydrogenase activity and is independent of the methyltransferase activity of PRMT3. Post-translationally, the N-terminus is blocked most probably by acetylation. In terms of tissue distribution, strongly expressed in kidney, lung, testis, intestine, stomach, and trachea, but weakly in the liver.

The protein resides in the cytoplasm. It localises to the cytosol. Its subcellular location is the cell projection. The protein localises to the axon. It carries out the reaction an aldehyde + NAD(+) + H2O = a carboxylate + NADH + 2 H(+). It catalyses the reaction all-trans-retinal + NAD(+) + H2O = all-trans-retinoate + NADH + 2 H(+). The catalysed reaction is 9-cis-retinal + NAD(+) + H2O = 9-cis-retinoate + NADH + 2 H(+). The enzyme catalyses 11-cis-retinal + NAD(+) + H2O = 11-cis-retinoate + NADH + 2 H(+). It carries out the reaction 13-cis-retinal + NAD(+) + H2O = 13-cis-retinoate + NADH + 2 H(+). It catalyses the reaction 3-deoxyglucosone + NAD(+) + H2O = 2-dehydro-3-deoxy-D-gluconate + NADH + 2 H(+). The catalysed reaction is (E)-4-hydroxynon-2-enal + NAD(+) + H2O = (E)-4-hydroxynon-2-enoate + NADH + 2 H(+). The enzyme catalyses malonaldehyde + NAD(+) + H2O = 3-oxopropanoate + NADH + 2 H(+). It carries out the reaction hexanal + NAD(+) + H2O = hexanoate + NADH + 2 H(+). It catalyses the reaction propanal + NAD(+) + H2O = propanoate + NADH + 2 H(+). The catalysed reaction is acetaldehyde + NAD(+) + H2O = acetate + NADH + 2 H(+). The enzyme catalyses benzaldehyde + NAD(+) + H2O = benzoate + NADH + 2 H(+). It carries out the reaction 4-aminobutanal + NAD(+) + H2O = 4-aminobutanoate + NADH + 2 H(+). Its pathway is cofactor metabolism; retinol metabolism. Inhibited by chloral hydrate. Its function is as follows. Cytosolic dehydrogenase that catalyzes the irreversible oxidation of a wide range of aldehydes to their corresponding carboxylic acid. Functions downstream of retinol dehydrogenases and catalyzes the oxidation of retinaldehyde into retinoic acid, the second step in the oxidation of retinol/vitamin A into retinoic acid. This pathway is crucial to control the levels of retinol and retinoic acid, two important molecules which excess can be teratogenic and cytotoxic. Also oxidizes aldehydes resulting from lipid peroxidation like (E)-4-hydroxynon-2-enal/HNE, malonaldehyde and hexanal that form protein adducts and are highly cytotoxic. By participating for instance to the clearance of (E)-4-hydroxynon-2-enal/HNE in the lens epithelium prevents the formation of HNE-protein adducts and lens opacification. Functions also downstream of fructosamine-3-kinase in the fructosamine degradation pathway by catalyzing the oxidation of 3-deoxyglucosone, the carbohydrate product of fructosamine 3-phosphate decomposition, which is itself a potent glycating agent that may react with lysine and arginine side-chains of proteins. Also has an aminobutyraldehyde dehydrogenase activity and is probably part of an alternative pathway for the biosynthesis of GABA/4-aminobutanoate in midbrain, thereby playing a role in GABAergic synaptic transmission. The protein is Aldehyde dehydrogenase 1A1 of Rattus norvegicus (Rat).